The primary structure comprises 1207 residues: DNA-directed RNA polymerase subunit beta' (1207 aa).

4 residues coordinate Zn(2+): C60, C62, C75, and C78. The Mg(2+) site is built by D450, D452, and D454. Zn(2+)-binding residues include C819, C893, C900, and C903.

Belongs to the RNA polymerase beta' chain family. As to quaternary structure, the RNAP catalytic core consists of 2 alpha, 1 beta, 1 beta' and 1 omega subunit. When a sigma factor is associated with the core the holoenzyme is formed, which can initiate transcription. It depends on Mg(2+) as a cofactor. Zn(2+) serves as cofactor.

The catalysed reaction is RNA(n) + a ribonucleoside 5'-triphosphate = RNA(n+1) + diphosphate. In terms of biological role, DNA-dependent RNA polymerase catalyzes the transcription of DNA into RNA using the four ribonucleoside triphosphates as substrates. The chain is DNA-directed RNA polymerase subunit beta' from Streptococcus pyogenes serotype M3 (strain ATCC BAA-595 / MGAS315).